Here is a 154-residue protein sequence, read N- to C-terminus: SsrA-binding protein (154 aa).

Residues 130–154 (KLHDKRETERRRQDQRDIQRAIKRA) are disordered. Residues 133–154 (DKRETERRRQDQRDIQRAIKRA) show a composition bias toward basic and acidic residues.

This sequence belongs to the SmpB family.

It is found in the cytoplasm. In terms of biological role, required for rescue of stalled ribosomes mediated by trans-translation. Binds to transfer-messenger RNA (tmRNA), required for stable association of tmRNA with ribosomes. tmRNA and SmpB together mimic tRNA shape, replacing the anticodon stem-loop with SmpB. tmRNA is encoded by the ssrA gene; the 2 termini fold to resemble tRNA(Ala) and it encodes a 'tag peptide', a short internal open reading frame. During trans-translation Ala-aminoacylated tmRNA acts like a tRNA, entering the A-site of stalled ribosomes, displacing the stalled mRNA. The ribosome then switches to translate the ORF on the tmRNA; the nascent peptide is terminated with the 'tag peptide' encoded by the tmRNA and targeted for degradation. The ribosome is freed to recommence translation, which seems to be the essential function of trans-translation. This Synechococcus elongatus (strain ATCC 33912 / PCC 7942 / FACHB-805) (Anacystis nidulans R2) protein is SsrA-binding protein.